A 390-amino-acid chain; its full sequence is Scoulerine-9-O-methyltransferase 1 (390 aa).

Glu-153 contacts substrate. S-adenosyl-L-methionine-binding positions include Met-207, Ser-211, Gly-235, Asp-258, 278-279 (DM), and Lys-292. The active-site Proton acceptor is His-296. Position 296–297 (296–297 (HD)) interacts with substrate.

This sequence belongs to the class I-like SAM-binding methyltransferase superfamily. Cation-independent O-methyltransferase family. COMT subfamily. As to quaternary structure, homodimer. As to expression, highly expressed in capsules. Expressed is stems. Expressed at low levels in roots.

It carries out the reaction (S)-scoulerine + S-adenosyl-L-methionine = (S)-tetrahydrocolumbamine + S-adenosyl-L-homocysteine + H(+). The catalysed reaction is (S)-tetrahydrocolumbamine + S-adenosyl-L-methionine = (S)-tetrahydropalmatine + S-adenosyl-L-homocysteine + H(+). The enzyme catalyses (S)-norreticuline + S-adenosyl-L-methionine = (S)-norcodamine + S-adenosyl-L-homocysteine + H(+). It catalyses the reaction (S)-reticuline + S-adenosyl-L-methionine = (S)-codamine + S-adenosyl-L-homocysteine + H(+). The protein operates within alkaloid biosynthesis. In terms of biological role, methyltransferase involved in the biosynthesis of the benzylisoquinoline alkaloid noscapine. Catalyzes the conversion of (S)-scoulerine to (S)-tetrahydrocolumbamine. Can convert (S)-tetrahydrocolumbamine to tetrahydropalmatine. Can convert (S)-norreticuline to (S)-norcodamine. Can convert (S)-reticuline to (S)-codamine. Substrate preference is (S)-scoulerine &gt; (S)-tetrahydrocolumbamine &gt; (S)-norreticuline &gt; (S)-reticuline. The chain is Scoulerine-9-O-methyltransferase 1 from Papaver somniferum (Opium poppy).